A 209-amino-acid chain; its full sequence is Glycerol-3-phosphate acyltransferase (209 aa).

Transmembrane regions (helical) follow at residues 8–28 (NVLF…YILA), 78–98 (VLVL…LIGI), 124–144 (VLLV…LIVA), 149–169 (ISSL…FIVH), and 170–190 (PDMP…IIFY).

It belongs to the PlsY family. As to quaternary structure, probably interacts with PlsX.

It localises to the cell inner membrane. The catalysed reaction is an acyl phosphate + sn-glycerol 3-phosphate = a 1-acyl-sn-glycero-3-phosphate + phosphate. The protein operates within lipid metabolism; phospholipid metabolism. Its function is as follows. Catalyzes the transfer of an acyl group from acyl-phosphate (acyl-PO(4)) to glycerol-3-phosphate (G3P) to form lysophosphatidic acid (LPA). This enzyme utilizes acyl-phosphate as fatty acyl donor, but not acyl-CoA or acyl-ACP. This is Glycerol-3-phosphate acyltransferase from Nitratiruptor sp. (strain SB155-2).